Reading from the N-terminus, the 668-residue chain is Metastasis-associated protein MTA2 (668 aa).

In terms of domain architecture, BAH spans 1–144 (MAANMYRVGD…PVQKTLLADQ (144 aa)). Residues Ser-52 and Ser-54 each carry the phosphoserine modification. The ELM2 domain maps to 145 to 256 (GEIRVGCKYQ…KAMSTLVPQG (112 aa)). The residue at position 152 (Lys-152) is an N6-acetyllysine. Residues 263-315 (DEMEEWSASEAMLFEEALEKYGKDFNDIRQDFLPWKSLASIVQFYYMWKTTDR) form the SANT domain. Residues 367–394 (CESCHTTQSAQWYAWGPPNMQCRLCASC) form a GATA-type; atypical zinc finger. Positions 409–419 (QLEGATRGTTE) are enriched in polar residues. The tract at residues 409–437 (QLEGATRGTTEPHSRGHLSRPEAQSLSPY) is disordered. A phosphoserine mark is found at Ser-433 and Ser-435. N6-acetyllysine is present on Lys-460. A Glycyl lysine isopeptide (Lys-Gly) (interchain with G-Cter in SUMO2 and SUMO3); alternate cross-link involves residue Lys-492. A Glycyl lysine isopeptide (Lys-Gly) (interchain with G-Cter in SUMO2); alternate cross-link involves residue Lys-492. Lys-508 participates in a covalent cross-link: Glycyl lysine isopeptide (Lys-Gly) (interchain with G-Cter in SUMO2). N6-acetyllysine is present on residues Lys-522 and Lys-531. Thr-534 is modified (phosphothreonine). At Ser-548 the chain carries Phosphoserine. Residues Lys-559 and Lys-595 each participate in a glycyl lysine isopeptide (Lys-Gly) (interchain with G-Cter in SUMO2) cross-link. Disordered regions lie at residues 580–599 (ASGI…LNPA) and 647–668 (PPVP…VLED).

It belongs to the metastasis-associated protein family. As to quaternary structure, component of the nucleosome remodeling and deacetylase (NuRD) repressor complex, composed of core proteins MTA1, MTA2, MTA3, RBBP4, RBBP7, HDAC1, HDAC2, MBD2, MBD3, and peripherally associated proteins CDK2AP1, CDK2AP2, GATAD2A, GATAD2B, CHD3, CHD4 and CHD5. The exact stoichiometry of the NuRD complex is unknown, and some subunits such as MBD2 and MBD3, GATAD2A and GATAD2B, and CHD3, CHD4 and CHD5 define mutually exclusive NuRD complexes. Interacts with CHD3. Interacts with CHD4. Interacts with GATAD2A. Interacts with HDAC7. Interacts with MBD3. Interacts with p53/TP53. Interacts with MINT. Interacts with PIMREG. Interacts with NACC2. Interacts with ERCC6. Interacts with PWWP2B. Interacts with transcription factor BCL11A. In terms of tissue distribution, widely expressed.

The protein localises to the nucleus. May function as a transcriptional coregulator. Acts as a component of the histone deacetylase NuRD complex which participates in the remodeling of chromatin. In Homo sapiens (Human), this protein is Metastasis-associated protein MTA2 (MTA2).